The primary structure comprises 225 residues: Cytochrome c oxidase subunit 2 (225 aa).

Topologically, residues 1-26 (MMTWSQMSFSDMNSPIMEQMVFFHDH) are mitochondrial intermembrane. Residues 27 to 48 (SMMIILMITILTIYMITNIMMN) traverse the membrane as a helical segment. Residues 49–62 (NLLSRSMMEGQEIE) lie on the Mitochondrial matrix side of the membrane. Residues 63 to 82 (IIWTIIPAITLIFIAIPSLH) traverse the membrane as a helical segment. The Mitochondrial intermembrane portion of the chain corresponds to 83–225 (LLYLTDETFN…KNFINFINSS (143 aa)). Residues histidine 160, cysteine 195, glutamate 197, cysteine 199, histidine 203, and methionine 206 each contribute to the Cu cation site. Glutamate 197 lines the Mg(2+) pocket.

The protein belongs to the cytochrome c oxidase subunit 2 family. Component of the cytochrome c oxidase (complex IV, CIV), a multisubunit enzyme composed of a catalytic core of 3 subunits and several supernumerary subunits. The complex exists as a monomer or a dimer and forms supercomplexes (SCs) in the inner mitochondrial membrane with ubiquinol-cytochrome c oxidoreductase (cytochrome b-c1 complex, complex III, CIII). Cu cation serves as cofactor.

The protein localises to the mitochondrion inner membrane. The catalysed reaction is 4 Fe(II)-[cytochrome c] + O2 + 8 H(+)(in) = 4 Fe(III)-[cytochrome c] + 2 H2O + 4 H(+)(out). Component of the cytochrome c oxidase, the last enzyme in the mitochondrial electron transport chain which drives oxidative phosphorylation. The respiratory chain contains 3 multisubunit complexes succinate dehydrogenase (complex II, CII), ubiquinol-cytochrome c oxidoreductase (cytochrome b-c1 complex, complex III, CIII) and cytochrome c oxidase (complex IV, CIV), that cooperate to transfer electrons derived from NADH and succinate to molecular oxygen, creating an electrochemical gradient over the inner membrane that drives transmembrane transport and the ATP synthase. Cytochrome c oxidase is the component of the respiratory chain that catalyzes the reduction of oxygen to water. Electrons originating from reduced cytochrome c in the intermembrane space (IMS) are transferred via the dinuclear copper A center (CU(A)) of subunit 2 and heme A of subunit 1 to the active site in subunit 1, a binuclear center (BNC) formed by heme A3 and copper B (CU(B)). The BNC reduces molecular oxygen to 2 water molecules using 4 electrons from cytochrome c in the IMS and 4 protons from the mitochondrial matrix. This chain is Cytochrome c oxidase subunit 2 (COII), found in Rhipicephalus sanguineus (Brown dog tick).